The chain runs to 122 residues: Ig heavy chain V region M511 (122 aa).

In terms of domain architecture, Ig-like spans 1–114 (EVKLVESGGG…SYWYFDVWGA (114 aa)).

In Mus musculus (Mouse), this protein is Ig heavy chain V region M511.